The sequence spans 517 residues: Benzoate 4-monooxygenase bphA (517 aa).

A helical transmembrane segment spans residues 4-24; it reads LLLSPYGAYLGLALLVLYYLL. N282 and N325 each carry an N-linked (GlcNAc...) asparagine glycan. C461 contributes to the heme binding site.

This sequence belongs to the cytochrome P450 family. Heme serves as cofactor.

The protein localises to the membrane. The catalysed reaction is benzoate + reduced [NADPH--hemoprotein reductase] + O2 = 4-hydroxybenzoate + oxidized [NADPH--hemoprotein reductase] + H2O + H(+). Cytochrome P450 monooxygenase; part of the benzoic acid degradation pathway also known as the protocatechuic acid pathway. Benzoic acid debradation begins with the conversion of benzoic acid into 4-hydroxybenzoic acid through hydroxylation by the benzoate-4-monooxygenase bphA, and its partner NADPH-cytochrome P450 reductase cprA which act as a mediator in electron donation from NADPH. 4-Hydroxybenzoic acid is then converted into 3,4-dihydroxybenzoic acid (also called protocatechuic acid) by the p-hydroxybenzoate-m-hydroxylase phhA. Protocatechuic acid is converted into 3-carboxy-cis,cis-muconic acid by the intradiol ring-cleavage dioxygenase prcA, which is further metabolized through the 3-oxoadipate pathway to finally enter the tricarboxylic acid cycle (TCA). The protein is Benzoate 4-monooxygenase bphA of Aspergillus niger (strain ATCC MYA-4892 / CBS 513.88 / FGSC A1513).